A 44-amino-acid chain; its full sequence is uncharacterized protein (44 aa).

Residues 1–16 (MRISLLAVILALLFVA) form the signal peptide.

This is an uncharacterized protein from Helicobacter pylori (strain ATCC 700392 / 26695) (Campylobacter pylori).